A 184-amino-acid polypeptide reads, in one-letter code: Ribosome-recycling factor (184 aa).

This sequence belongs to the RRF family.

The protein resides in the cytoplasm. Functionally, responsible for the release of ribosomes from messenger RNA at the termination of protein biosynthesis. May increase the efficiency of translation by recycling ribosomes from one round of translation to another. In Aquifex aeolicus (strain VF5), this protein is Ribosome-recycling factor.